The primary structure comprises 461 residues: Cysteine--tRNA ligase (461 aa).

A Zn(2+)-binding site is contributed by Cys28. Residues 30–40 (ITVYDLCHIGH) carry the 'HIGH' region motif. Zn(2+) contacts are provided by Cys209, His234, and Glu238. The 'KMSKS' region signature appears at 266–270 (KMSKS). Lys269 serves as a coordination point for ATP.

This sequence belongs to the class-I aminoacyl-tRNA synthetase family. Monomer. Requires Zn(2+) as cofactor.

It is found in the cytoplasm. It catalyses the reaction tRNA(Cys) + L-cysteine + ATP = L-cysteinyl-tRNA(Cys) + AMP + diphosphate. The chain is Cysteine--tRNA ligase from Shigella boydii serotype 18 (strain CDC 3083-94 / BS512).